Here is a 368-residue protein sequence, read N- to C-terminus: Alanine racemase (368 aa).

Lysine 40 functions as the Proton acceptor; specific for D-alanine in the catalytic mechanism. At lysine 40 the chain carries N6-(pyridoxal phosphate)lysine. Arginine 134 serves as a coordination point for substrate. The active-site Proton acceptor; specific for L-alanine is tyrosine 263. Methionine 310 provides a ligand contact to substrate.

Belongs to the alanine racemase family. Requires pyridoxal 5'-phosphate as cofactor.

It carries out the reaction L-alanine = D-alanine. It participates in amino-acid biosynthesis; D-alanine biosynthesis; D-alanine from L-alanine: step 1/1. Its function is as follows. Catalyzes the interconversion of L-alanine and D-alanine. May also act on other amino acids. The chain is Alanine racemase (alr) from Listeria monocytogenes serotype 4b (strain CLIP80459).